The following is a 63-amino-acid chain: MRCVPVFVILLLLIASTPSVDATQKTKDDMSLASFHDNAKRFLQTLRNTRSCCPEEITCCPWG.

The signal sequence occupies residues 1–22; it reads MRCVPVFVILLLLIASTPSVDA. A propeptide spanning residues 23-50 is cleaved from the precursor; it reads TQKTKDDMSLASFHDNAKRFLQTLRNTR. A Tryptophan amide modification is found at Trp-62.

It belongs to the conotoxin T superfamily. Post-translationally, contains 2 disulfide bonds that can be either 'C1-C3, C2-C4' or 'C1-C4, C2-C3', since these disulfide connectivities have been observed for conotoxins with cysteine framework V (for examples, see AC P0DQQ7 and AC P81755). In terms of tissue distribution, expressed by the venom duct.

The protein resides in the secreted. The polypeptide is Conotoxin Pu5.4 (Conus pulicarius (Flea-bitten cone)).